The primary structure comprises 153 residues: Ribosomal RNA large subunit methyltransferase H (153 aa).

S-adenosyl-L-methionine is bound by residues Leu70, Gly102, and 121 to 126; that span reads LSSMTF.

The protein belongs to the RNA methyltransferase RlmH family. In terms of assembly, homodimer.

It is found in the cytoplasm. The enzyme catalyses pseudouridine(1915) in 23S rRNA + S-adenosyl-L-methionine = N(3)-methylpseudouridine(1915) in 23S rRNA + S-adenosyl-L-homocysteine + H(+). In terms of biological role, specifically methylates the pseudouridine at position 1915 (m3Psi1915) in 23S rRNA. This is Ribosomal RNA large subunit methyltransferase H from Dictyoglomus thermophilum (strain ATCC 35947 / DSM 3960 / H-6-12).